Here is a 151-residue protein sequence, read N- to C-terminus: D-aminoacyl-tRNA deacylase (151 aa).

Positions 137-138 match the Gly-cisPro motif, important for rejection of L-amino acids motif; it reads GP.

This sequence belongs to the DTD family. Homodimer.

The protein resides in the cytoplasm. The enzyme catalyses glycyl-tRNA(Ala) + H2O = tRNA(Ala) + glycine + H(+). It carries out the reaction a D-aminoacyl-tRNA + H2O = a tRNA + a D-alpha-amino acid + H(+). Functionally, an aminoacyl-tRNA editing enzyme that deacylates mischarged D-aminoacyl-tRNAs. Also deacylates mischarged glycyl-tRNA(Ala), protecting cells against glycine mischarging by AlaRS. Acts via tRNA-based rather than protein-based catalysis; rejects L-amino acids rather than detecting D-amino acids in the active site. By recycling D-aminoacyl-tRNA to D-amino acids and free tRNA molecules, this enzyme counteracts the toxicity associated with the formation of D-aminoacyl-tRNA entities in vivo and helps enforce protein L-homochirality. This chain is D-aminoacyl-tRNA deacylase, found in Fusobacterium nucleatum subsp. nucleatum (strain ATCC 25586 / DSM 15643 / BCRC 10681 / CIP 101130 / JCM 8532 / KCTC 2640 / LMG 13131 / VPI 4355).